The sequence spans 118 residues: NADH-quinone oxidoreductase subunit A (118 aa).

3 helical membrane-spanning segments follow: residues 5 to 25 (YAFI…PLVL), 62 to 82 (LYAL…PWAV), and 87 to 107 (LGLF…IGLV).

The protein belongs to the complex I subunit 3 family. In terms of assembly, NDH-1 is composed of 14 different subunits. Subunits NuoA, H, J, K, L, M, N constitute the membrane sector of the complex.

The protein resides in the cell membrane. It catalyses the reaction a quinone + NADH + 5 H(+)(in) = a quinol + NAD(+) + 4 H(+)(out). In terms of biological role, NDH-1 shuttles electrons from NADH, via FMN and iron-sulfur (Fe-S) centers, to quinones in the respiratory chain. The immediate electron acceptor for the enzyme in this species is believed to be ubiquinone. Couples the redox reaction to proton translocation (for every two electrons transferred, four hydrogen ions are translocated across the cytoplasmic membrane), and thus conserves the redox energy in a proton gradient. The chain is NADH-quinone oxidoreductase subunit A from Herpetosiphon aurantiacus (strain ATCC 23779 / DSM 785 / 114-95).